Consider the following 562-residue polypeptide: Zinc finger protein 579 (562 aa).

Residues 1–11 (MDPQPPPPAQG) are compositionally biased toward pro residues. The segment at 1–43 (MDPQPPPPAQGSPPHRGRGRGRGRGRGRGRGRGRGGAGAPRAP) is disordered. The span at 15–33 (HRGRGRGRGRGRGRGRGRG) shows a compositional bias: basic residues. 3 consecutive C2H2-type zinc fingers follow at residues 44–66 (LPCP…RLSH), 72–94 (HACP…LRGH), and 100–123 (LRCA…AQEH). Residue arginine 92 is modified to Omega-N-methylarginine. The segment at 139-203 (TAEPSWGPQD…SESEEAEAGA (65 aa)) is disordered. Phosphoserine is present on residues serine 194 and serine 196. 2 consecutive C2H2-type zinc fingers follow at residues 270 to 292 (HQCS…RLVH) and 298 to 320 (FVCP…RRVH). The tract at residues 327–379 (APLPAAGKKDDKASGARNSAKGPEGGEGAECGGASEGGEGQNGGDAAPARPPA) is disordered. Positions 349–369 (PEGGEGAECGGASEGGEGQNG) are enriched in gly residues. 3 C2H2-type zinc fingers span residues 384 to 406 (FWCP…GVTH), 412 to 434 (FQCV…AQVH), and 441 to 463 (HPCP…QRCH). The disordered stretch occupies residues 477–562 (QAQAPTSPPP…HLRGLGGLAS (86 aa)). 2 stretches are compositionally biased toward pro residues: residues 482–491 (TSPPPPPPPL) and 512–525 (PSPG…PAPP). Residue serine 483 is modified to Phosphoserine.

It belongs to the krueppel C2H2-type zinc-finger protein family.

It localises to the nucleus. Its function is as follows. May be involved in transcriptional regulation. This is Zinc finger protein 579 (ZNF579) from Homo sapiens (Human).